Consider the following 358-residue polypeptide: Ribosomal RNA large subunit methyltransferase M (358 aa).

Residues Ser187, 220–223 (CPGG), Asp239, Asp259, and Asp276 contribute to the S-adenosyl-L-methionine site. Lys305 (proton acceptor) is an active-site residue.

Belongs to the class I-like SAM-binding methyltransferase superfamily. RNA methyltransferase RlmE family. RlmM subfamily. In terms of assembly, monomer.

Its subcellular location is the cytoplasm. It catalyses the reaction cytidine(2498) in 23S rRNA + S-adenosyl-L-methionine = 2'-O-methylcytidine(2498) in 23S rRNA + S-adenosyl-L-homocysteine + H(+). Functionally, catalyzes the 2'-O-methylation at nucleotide C2498 in 23S rRNA. This is Ribosomal RNA large subunit methyltransferase M from Shewanella woodyi (strain ATCC 51908 / MS32).